Here is a 180-residue protein sequence, read N- to C-terminus: Large ribosomal subunit protein uL5 (180 aa).

The protein belongs to the universal ribosomal protein uL5 family. As to quaternary structure, part of the 50S ribosomal subunit; part of the 5S rRNA/L5/L18/L25 subcomplex. Contacts the 5S rRNA and the P site tRNA. Forms a bridge to the 30S subunit in the 70S ribosome.

Functionally, this is one of the proteins that bind and probably mediate the attachment of the 5S RNA into the large ribosomal subunit, where it forms part of the central protuberance. In the 70S ribosome it contacts protein S13 of the 30S subunit (bridge B1b), connecting the 2 subunits; this bridge is implicated in subunit movement. Contacts the P site tRNA; the 5S rRNA and some of its associated proteins might help stabilize positioning of ribosome-bound tRNAs. This chain is Large ribosomal subunit protein uL5, found in Anaeromyxobacter dehalogenans (strain 2CP-1 / ATCC BAA-258).